A 659-amino-acid chain; its full sequence is UvrABC system protein B (659 aa).

Residues 25-414 (EGVRRGAREQ…PSLVVEQIVR (390 aa)) enclose the Helicase ATP-binding domain. 38–45 (GATGTGKT) lines the ATP pocket. The Beta-hairpin signature appears at 91–114 (YYDYYQPEAYIPTTDTYIEKDALI). The Helicase C-terminal domain maps to 431-597 (QIDDLYAEIR…TIVKPVRDVI (167 aa)). Residues 620-655 (PKVVAKLRKEMMQAAKDLDFERAAEIRDIIFELEKK) form the UVR domain.

This sequence belongs to the UvrB family. In terms of assembly, forms a heterotetramer with UvrA during the search for lesions. Interacts with UvrC in an incision complex.

It localises to the cytoplasm. The UvrABC repair system catalyzes the recognition and processing of DNA lesions. A damage recognition complex composed of 2 UvrA and 2 UvrB subunits scans DNA for abnormalities. Upon binding of the UvrA(2)B(2) complex to a putative damaged site, the DNA wraps around one UvrB monomer. DNA wrap is dependent on ATP binding by UvrB and probably causes local melting of the DNA helix, facilitating insertion of UvrB beta-hairpin between the DNA strands. Then UvrB probes one DNA strand for the presence of a lesion. If a lesion is found the UvrA subunits dissociate and the UvrB-DNA preincision complex is formed. This complex is subsequently bound by UvrC and the second UvrB is released. If no lesion is found, the DNA wraps around the other UvrB subunit that will check the other stand for damage. The polypeptide is UvrABC system protein B (Symbiobacterium thermophilum (strain DSM 24528 / JCM 14929 / IAM 14863 / T)).